A 132-amino-acid chain; its full sequence is Translation initiation factor 5A (132 aa).

Lys36 is modified (hypusine).

The protein belongs to the eIF-5A family.

It is found in the cytoplasm. Functionally, functions by promoting the formation of the first peptide bond. The sequence is that of Translation initiation factor 5A (eIF5A) from Caldivirga maquilingensis (strain ATCC 700844 / DSM 13496 / JCM 10307 / IC-167).